We begin with the raw amino-acid sequence, 540 residues long: Extracellular matrix protein 1 (540 aa).

A signal peptide spans 1–19 (MGTTARAALVLTYLAVASA). 2 disordered regions span residues 41–85 (VGYA…EATP) and 120–175 (LQHP…PSPD). Composition is skewed to polar residues over residues 71–85 (GQSQVQPPPSQEATP) and 146–156 (NAAQHCQQDRS). A run of 2 repeats spans residues 150–279 (HCQQ…QPHY) and 283–405 (ACPS…YPNY). Residues 150–405 (HCQQDRSQGG…FARRAPYPNY (256 aa)) are 2 X approximate repeats. Asparagine 354 carries an N-linked (GlcNAc...) asparagine glycan. Residue asparagine 444 is glycosylated (N-linked (GlcNAc...) (complex) asparagine). Positions 515 to 540 (ENAKGQGEQGSTGGTNISSTSEPKEE) are disordered. Residues 528-540 (GTNISSTSEPKEE) are compositionally biased toward low complexity. A glycan (N-linked (GlcNAc...) asparagine) is linked at asparagine 530.

Interacts (via C-terminus) with HSPG2 (via C-terminus). Interacts with EFEMP1/FBLN3 and LAMB3. Interacts with MMP9. In terms of tissue distribution, expressed in breast cancer tissues. Little or no expression observed in normal breast tissues. Expressed in skin; wide expression is observed throughout the dermis with minimal expression in the epidermis.

It localises to the secreted. It is found in the extracellular space. The protein resides in the extracellular matrix. Involved in endochondral bone formation as negative regulator of bone mineralization. Stimulates the proliferation of endothelial cells and promotes angiogenesis. Inhibits MMP9 proteolytic activity. In Homo sapiens (Human), this protein is Extracellular matrix protein 1 (ECM1).